A 795-amino-acid polypeptide reads, in one-letter code: Protocadherin beta-5 (795 aa).

Positions 1-30 (METALAKTPQKRQVMFLAILLLLWEAGSEA) are cleaved as a signal peptide. The Extracellular portion of the chain corresponds to 31–689 (VRYSIPEETE…AQADSLTVYL (659 aa)). 5 Cadherin domains span residues 35–133 (IPEE…APEF), 138–242 (MLLK…APEF), 247–346 (YEVQ…APEL), 351–450 (LSSP…APAF), and 455–560 (YTLF…SPFV). N-linked (GlcNAc...) asparagine glycosylation occurs at Asn169. Position 296 is an N6-acetyllysine (Lys296). 2 N-linked (GlcNAc...) asparagine glycosylation sites follow: Asn417 and Asn435. An N-linked (GlcNAc...) asparagine glycan is attached at Asn566. The region spanning 567-670 (GSAPCTELVP…LVDGFSQPYL (104 aa)) is the Cadherin 6 domain. The chain crosses the membrane as a helical span at residues 690–710 (VVALASVSSLFLFSVLLFVAV). Topologically, residues 711–795 (RLCRRSRAAP…AAFRNSFGLN (85 aa)) are cytoplasmic.

The protein localises to the cell membrane. Its function is as follows. Potential calcium-dependent cell-adhesion protein. May be involved in the establishment and maintenance of specific neuronal connections in the brain. The sequence is that of Protocadherin beta-5 (PCDHB5) from Homo sapiens (Human).